The sequence spans 289 residues: Mas-related G-protein coupled receptor member G (289 aa).

At 1–13 the chain is on the extracellular side; that stretch reads MFGLFGLWRTFDS. The helical transmembrane segment at 14–34 threads the bilayer; that stretch reads VVFYLTLIVGLGGPVGNGLVL. Over 35 to 42 the chain is Cytoplasmic; the sequence is WNLGFRIK. Residues 43 to 63 traverse the membrane as a helical segment; the sequence is KGPFSIYLLHLAAADFLFLSC. The Extracellular segment spans residues 64 to 78; that stretch reads RVGFSVAQAALGAQD. Residues 79–99 traverse the membrane as a helical segment; that stretch reads TLYFVLTFLWFAVGLWLLAAF. Topologically, residues 100 to 120 are cytoplasmic; that stretch reads SVERCLSDLFPACYQGCRPRH. A helical membrane pass occupies residues 121 to 141; it reads ASAVLCALVWTPTLPAVPLPA. Residues 142–163 are Extracellular-facing; sequence NACGLLRNSACPLVCPRYHVAS. The chain crosses the membrane as a helical span at residues 164–184; the sequence is VTWFLVLARVAWTAGVVLFVW. The Cytoplasmic portion of the chain corresponds to 185-195; that stretch reads VTCCSTRPRPR. The helical transmembrane segment at 196 to 216 threads the bilayer; sequence LYGIVLGALLLLFFCGLPSVF. Residues 217 to 221 are Extracellular-facing; sequence YWSLQ. A helical transmembrane segment spans residues 222–242; it reads PLLNFLLPVFSPLATLLACVN. The Cytoplasmic segment spans residues 243–289; it reads SSSKPLIYSGLGRQPGKREPLRSVLRRALGEGAELGARGQSLPMGLL.

Belongs to the G-protein coupled receptor 1 family. Mas subfamily.

Its subcellular location is the cell membrane. In terms of biological role, orphan receptor. May regulate nociceptor function and/or development, including the sensation or modulation of pain. The protein is Mas-related G-protein coupled receptor member G (MRGPRG) of Homo sapiens (Human).